A 308-amino-acid polypeptide reads, in one-letter code: tRNA dimethylallyltransferase (308 aa).

10–17 (GPTASGKT) serves as a coordination point for ATP. 12–17 (TASGKT) lines the substrate pocket. 2 interaction with substrate tRNA regions span residues 35–38 (DSSL) and 159–163 (QRIFR).

Belongs to the IPP transferase family. Monomer. Requires Mg(2+) as cofactor.

It carries out the reaction adenosine(37) in tRNA + dimethylallyl diphosphate = N(6)-dimethylallyladenosine(37) in tRNA + diphosphate. Its function is as follows. Catalyzes the transfer of a dimethylallyl group onto the adenine at position 37 in tRNAs that read codons beginning with uridine, leading to the formation of N6-(dimethylallyl)adenosine (i(6)A). In Francisella tularensis subsp. tularensis (strain FSC 198), this protein is tRNA dimethylallyltransferase.